Consider the following 182-residue polypeptide: Endoribonuclease YbeY (182 aa).

Zn(2+)-binding residues include His120, His124, and His130. The interval 157–182 (RGVSFAPKPTGAGAFPSAADRDDTQN) is disordered.

It belongs to the endoribonuclease YbeY family. Zn(2+) is required as a cofactor.

The protein localises to the cytoplasm. Single strand-specific metallo-endoribonuclease involved in late-stage 70S ribosome quality control and in maturation of the 3' terminus of the 16S rRNA. This Corynebacterium jeikeium (strain K411) protein is Endoribonuclease YbeY.